Here is a 594-residue protein sequence, read N- to C-terminus: Shugoshin (594 aa).

A coiled-coil region spans residues 38 to 61 (KITDMETKVSELVQENVSLRSRLS). 4 disordered regions span residues 104 to 178 (SGIH…KSSR), 201 to 266 (QLPI…TNKN), 342 to 380 (SKIKHSMKHPRTKLKGGQDDIMPHTDYDKDDEKRERRTR), and 519 to 549 (TKQQAIENNSSDPNVSDENENSNVKPTRTKQ). Residues 220-240 (EEESQENKHTKEEREDEGKEN) adopt a coiled-coil conformation. Over residues 224 to 239 (QENKHTKEEREDEGKE) the composition is skewed to basic and acidic residues. A compositionally biased stretch (polar residues) spans 252–261 (SVTNTGTECS). The segment covering 343 to 355 (KIKHSMKHPRTKL) has biased composition (basic residues). Basic and acidic residues predominate over residues 357-376 (GGQDDIMPHTDYDKDDEKRE). Composition is skewed to polar residues over residues 519 to 532 (TKQQAIENNSSDPN) and 539 to 549 (NSNVKPTRTKQ).

It belongs to the shugoshin family.

The protein localises to the nucleus. It localises to the chromosome. Its subcellular location is the centromere. In terms of biological role, plays a central role in chromosome cohesion during cell division by preventing premature dissociation of cohesin complex from centromeres after prophase, when most of cohesin complex dissociates from chromosomes arms. This Kluyveromyces lactis (strain ATCC 8585 / CBS 2359 / DSM 70799 / NBRC 1267 / NRRL Y-1140 / WM37) (Yeast) protein is Shugoshin (SGO1).